We begin with the raw amino-acid sequence, 363 residues long: Small ribosomal subunit biogenesis GTPase RsgA (363 aa).

Residues 112–268 (HQQVIAANID…LIDTPGMREL (157 aa)) enclose the CP-type G domain. GTP is bound by residues 157-160 (TKAD) and 210-218 (GSSGAGKST). Residues C291, C296, H298, and C304 each contribute to the Zn(2+) site. The disordered stretch occupies residues 340 to 363 (RVAQNNRGKGSGKRPASIDRPGRR).

It belongs to the TRAFAC class YlqF/YawG GTPase family. RsgA subfamily. Monomer. Associates with 30S ribosomal subunit, binds 16S rRNA. Zn(2+) is required as a cofactor.

The protein resides in the cytoplasm. In terms of biological role, one of several proteins that assist in the late maturation steps of the functional core of the 30S ribosomal subunit. Helps release RbfA from mature subunits. May play a role in the assembly of ribosomal proteins into the subunit. Circularly permuted GTPase that catalyzes slow GTP hydrolysis, GTPase activity is stimulated by the 30S ribosomal subunit. This is Small ribosomal subunit biogenesis GTPase RsgA from Xanthomonas oryzae pv. oryzae (strain PXO99A).